We begin with the raw amino-acid sequence, 436 residues long: Adenine nucleotide transporter BT1, chloroplastic/amyloplastic/mitochondrial (436 aa).

Positions Ala83–Pro135 are disordered. Solcar repeat units follow at residues Gln132 to Phe216, Ile227 to Leu311, and Val324 to Ile412. A run of 6 helical transmembrane segments spans residues Arg137–Ile158, Ala193–Ala213, Ile229–Thr247, Ser290–Arg310, Val327–Leu347, and Leu384–Cys405. A compositionally biased stretch (acidic residues) spans Glu417–Gly428. A disordered region spans residues Glu417–Glu436.

This sequence belongs to the mitochondrial carrier (TC 2.A.29) family. In terms of tissue distribution, highly expressed in silks and endosperm of developing kernels. Expressed at intermediate levels in tassels and lower levels in stems and leaves.

It is found in the plastid. It localises to the chloroplast inner membrane. The protein localises to the amyloplast inner membrane. The protein resides in the mitochondrion inner membrane. Inhibited by mersalyl. Its function is as follows. Probable adenylate translocator that mediates transport of ADP-glucose into endosperm storage plastids during starch synthesis. Transports cytosolic ADP-glucose to amyloplast stroma by counter-exchange with ADP. The sequence is that of Adenine nucleotide transporter BT1, chloroplastic/amyloplastic/mitochondrial (BT1) from Zea mays (Maize).